A 191-amino-acid polypeptide reads, in one-letter code: Molybdenum cofactor guanylyltransferase (191 aa).

Residues 13 to 15 (LAG), lysine 26, aspartate 72, and aspartate 102 each bind GTP. Aspartate 102 contacts Mg(2+).

It belongs to the MobA family. As to quaternary structure, monomer. The cofactor is Mg(2+).

The protein resides in the cytoplasm. It carries out the reaction Mo-molybdopterin + GTP + H(+) = Mo-molybdopterin guanine dinucleotide + diphosphate. Transfers a GMP moiety from GTP to Mo-molybdopterin (Mo-MPT) cofactor (Moco or molybdenum cofactor) to form Mo-molybdopterin guanine dinucleotide (Mo-MGD) cofactor. The polypeptide is Molybdenum cofactor guanylyltransferase (Pseudomonas entomophila (strain L48)).